Here is a 158-residue protein sequence, read N- to C-terminus: Crossover junction endodeoxyribonuclease RuvC (158 aa).

Catalysis depends on residues aspartate 7, glutamate 67, and aspartate 140. The Mg(2+) site is built by aspartate 7, glutamate 67, and aspartate 140.

Belongs to the RuvC family. Homodimer which binds Holliday junction (HJ) DNA. The HJ becomes 2-fold symmetrical on binding to RuvC with unstacked arms; it has a different conformation from HJ DNA in complex with RuvA. In the full resolvosome a probable DNA-RuvA(4)-RuvB(12)-RuvC(2) complex forms which resolves the HJ. It depends on Mg(2+) as a cofactor.

The protein localises to the cytoplasm. It carries out the reaction Endonucleolytic cleavage at a junction such as a reciprocal single-stranded crossover between two homologous DNA duplexes (Holliday junction).. The RuvA-RuvB-RuvC complex processes Holliday junction (HJ) DNA during genetic recombination and DNA repair. Endonuclease that resolves HJ intermediates. Cleaves cruciform DNA by making single-stranded nicks across the HJ at symmetrical positions within the homologous arms, yielding a 5'-phosphate and a 3'-hydroxyl group; requires a central core of homology in the junction. The consensus cleavage sequence is 5'-(A/T)TT(C/G)-3'. Cleavage occurs on the 3'-side of the TT dinucleotide at the point of strand exchange. HJ branch migration catalyzed by RuvA-RuvB allows RuvC to scan DNA until it finds its consensus sequence, where it cleaves and resolves the cruciform DNA. The protein is Crossover junction endodeoxyribonuclease RuvC of Dictyoglomus thermophilum (strain ATCC 35947 / DSM 3960 / H-6-12).